Reading from the N-terminus, the 375-residue chain is Chaperone protein DnaJ (375 aa).

In terms of domain architecture, J spans 5–70 (DYYEILGISK…EKRAAYDQYG (66 aa)). The CR-type zinc-finger motif lies at 130–208 (GIIKEICIPT…CHGNGRVERS (79 aa)). Cys143, Cys146, Cys160, Cys163, Cys182, Cys185, Cys196, and Cys199 together coordinate Zn(2+). CXXCXGXG motif repeat units follow at residues 143–150 (CEKCRGTG), 160–167 (CMTCHGQG), 182–189 (CPTCHGHG), and 196–203 (CNKCHGNG).

Belongs to the DnaJ family. In terms of assembly, homodimer. The cofactor is Zn(2+).

The protein localises to the cytoplasm. Participates actively in the response to hyperosmotic and heat shock by preventing the aggregation of stress-denatured proteins and by disaggregating proteins, also in an autonomous, DnaK-independent fashion. Unfolded proteins bind initially to DnaJ; upon interaction with the DnaJ-bound protein, DnaK hydrolyzes its bound ATP, resulting in the formation of a stable complex. GrpE releases ADP from DnaK; ATP binding to DnaK triggers the release of the substrate protein, thus completing the reaction cycle. Several rounds of ATP-dependent interactions between DnaJ, DnaK and GrpE are required for fully efficient folding. Also involved, together with DnaK and GrpE, in the DNA replication of plasmids through activation of initiation proteins. This chain is Chaperone protein DnaJ, found in Blochmanniella pennsylvanica (strain BPEN).